Consider the following 476-residue polypeptide: Doublecortin domain-containing protein 2 (476 aa).

2 Doublecortin domains span residues 17–100 (KSVL…LNYL) and 139–221 (CTIF…LPYS). The tract at residues 234-476 (FGQKASSLPP…QQNKDYAAVA (243 aa)) is disordered. The span at 261 to 272 (STVGSSDNSSPQ) shows a compositional bias: polar residues. At S270 the chain carries Phosphoserine. Positions 279–289 (KKEDVNSEKLT) are enriched in basic and acidic residues. Residues 296-306 (KLKNSQETIPN) show a composition bias toward polar residues. Over residues 354-366 (EKANKDAEQKEDF) the composition is skewed to basic and acidic residues. Positions 415 to 426 (ELQQVNNELQLV) are enriched in low complexity. Positions 446–455 (DPQRPPRPEV) are enriched in basic and acidic residues.

In terms of assembly, interacts with DVL1, DVL2 and DVL3. In terms of tissue distribution, ubiquitously expressed. In brain, highly expressed in the entorhinal cortex, inferior temporal cortex, medial temporal cortex, hypothalamus, amygdala and hippocampus. Expressed in liver by cholangiocytes, the epithelial cells of the bile ducts (at protein level).

The protein resides in the cell projection. Its subcellular location is the cilium. The protein localises to the cytoplasm. It is found in the cytoskeleton. It localises to the cilium axoneme. The protein resides in the kinocilium. Functionally, protein that plays a role in the inhibition of canonical Wnt signaling pathway. May be involved in neuronal migration during development of the cerebral neocortex. Involved in the control of ciliogenesis and ciliary length. The chain is Doublecortin domain-containing protein 2 (DCDC2) from Homo sapiens (Human).